The sequence spans 432 residues: Adenylosuccinate synthetase (432 aa).

Residues 13-19 and 41-43 each bind GTP; these read GDEGKGK and GHT. Aspartate 14 (proton acceptor) is an active-site residue. The Mg(2+) site is built by aspartate 14 and glycine 41. Residues 14–17, 39–42, threonine 130, arginine 144, glutamine 225, threonine 240, and arginine 304 contribute to the IMP site; these read DEGK and NAGH. Residue histidine 42 is the Proton donor of the active site. Position 300 to 306 (300 to 306) interacts with substrate; the sequence is ATTGRSR. Residues arginine 306, 332–334, and 415–417 contribute to the GTP site; these read KLD and STG.

It belongs to the adenylosuccinate synthetase family. Homodimer. The cofactor is Mg(2+).

The protein localises to the cytoplasm. The catalysed reaction is IMP + L-aspartate + GTP = N(6)-(1,2-dicarboxyethyl)-AMP + GDP + phosphate + 2 H(+). Its pathway is purine metabolism; AMP biosynthesis via de novo pathway; AMP from IMP: step 1/2. Functionally, plays an important role in the de novo pathway of purine nucleotide biosynthesis. Catalyzes the first committed step in the biosynthesis of AMP from IMP. The chain is Adenylosuccinate synthetase from Yersinia enterocolitica serotype O:8 / biotype 1B (strain NCTC 13174 / 8081).